The chain runs to 1157 residues: uncharacterized protein (1157 aa).

The signal sequence occupies residues 1–18; that stretch reads MNRNIFITLLISLLALSG. A lipid anchor (N-palmitoyl cysteine) is attached at Cys19. Cys19 is lipidated: S-diacylglycerol cysteine. 4 helical membrane-spanning segments follow: residues 292–312, 394–414, 423–443, and 458–478; these read LSVSALLTLYIMFTGFSFLIG, LGFIYIILYLIALYFIFLLIF, ALITIGMIITMAPIFICFMLF, and ISYAIQPIILFVGIAFIGMII. The tract at residues 1134–1157 is disordered; the sequence is QYQKPVENSGRKLRKLEDHLRNMK. Residues 1148-1157 show a composition bias toward basic and acidic residues; the sequence is KLEDHLRNMK.

The protein belongs to the TrbL/VirB6 family.

Its subcellular location is the cell membrane. This is an uncharacterized protein from Rickettsia bellii (strain RML369-C).